A 200-amino-acid chain; its full sequence is UPF0488 protein CG14286 (200 aa).

Disordered regions lie at residues 1 to 28 and 139 to 174; these read MHKRRTAKSINKPPPIQGAIKKPTPVAE and KDFRFNFPSPAEDTSSKEPQPVQDFDPSSLQPAEAG.

It belongs to the UPF0488 family.

This chain is UPF0488 protein CG14286, found in Drosophila melanogaster (Fruit fly).